A 373-amino-acid polypeptide reads, in one-letter code: MALVKLQTQHFRNLLSAPVEFSPSFNLLYGANGSGKTSVLEAIGYLGLGRSFRVSRHQAVVAHGQSKLTVFGALDSGLLAQESSEKVEHRIGISRDVSLKETQLRVDGEAVRSLSFLAMHLPVSVIDPGVFDIVAGGPGKRRQFLDWLVFHVEPSFSSLWQQVQRVTSQRNQMLRNGRLDESLMRVWDSQYGALAESLSDIRETVFQRFKIAFESVLAELDAPWVEGLKMDFYPGWDRSTALTEVLVNHREQERRMGHTLYGPNRADIRLKFGGRPVAETFSRGQQKTLVILMKIAQGKVLSDLGKQVTFLLDDINAELDVRHRVMLARNLQELRCQVFITSIEHPEPDTLWHDGDTPEYRMFHVEHGQLTEE.

Residue 30–37 coordinates ATP; sequence GANGSGKT.

It belongs to the RecF family.

It is found in the cytoplasm. In terms of biological role, the RecF protein is involved in DNA metabolism; it is required for DNA replication and normal SOS inducibility. RecF binds preferentially to single-stranded, linear DNA. It also seems to bind ATP. The sequence is that of DNA replication and repair protein RecF from Marinobacter nauticus (strain ATCC 700491 / DSM 11845 / VT8) (Marinobacter aquaeolei).